Reading from the N-terminus, the 171-residue chain is Secretion monitor (171 aa).

The signal sequence occupies residues 1–36 (MIGILNRWRQFGRRYFWPHLLLGMVAASLGLPTSLN).

Belongs to the SecM family.

Its subcellular location is the cytoplasm. The protein resides in the cytosol. It localises to the periplasm. Regulates secA expression by translational coupling of the secM secA operon. Translational pausing at a specific Pro residue 5 residues before the end of the protein may allow disruption of a mRNA repressor helix that normally suppresses secA translation initiation. The chain is Secretion monitor from Pectobacterium carotovorum subsp. carotovorum (strain PC1).